The following is a 134-amino-acid chain: Prefoldin subunit alpha (134 aa).

The protein belongs to the prefoldin subunit alpha family. As to quaternary structure, heterohexamer of two alpha and four beta subunits.

The protein localises to the cytoplasm. In terms of biological role, molecular chaperone capable of stabilizing a range of proteins. Seems to fulfill an ATP-independent, HSP70-like function in archaeal de novo protein folding. In Pyrobaculum calidifontis (strain DSM 21063 / JCM 11548 / VA1), this protein is Prefoldin subunit alpha.